The chain runs to 264 residues: GTP cyclohydrolase FolE2 (264 aa).

Belongs to the GTP cyclohydrolase IV family.

The enzyme catalyses GTP + H2O = 7,8-dihydroneopterin 3'-triphosphate + formate + H(+). Its pathway is cofactor biosynthesis; 7,8-dihydroneopterin triphosphate biosynthesis; 7,8-dihydroneopterin triphosphate from GTP: step 1/1. Converts GTP to 7,8-dihydroneopterin triphosphate. The chain is GTP cyclohydrolase FolE2 from Akkermansia muciniphila (strain ATCC BAA-835 / DSM 22959 / JCM 33894 / BCRC 81048 / CCUG 64013 / CIP 107961 / Muc).